Here is a 505-residue protein sequence, read N- to C-terminus: ATP synthase subunit alpha, chloroplastic (505 aa).

170–177 (GDRQTGKT) contributes to the ATP binding site.

It belongs to the ATPase alpha/beta chains family. F-type ATPases have 2 components, CF(1) - the catalytic core - and CF(0) - the membrane proton channel. CF(1) has five subunits: alpha(3), beta(3), gamma(1), delta(1), epsilon(1). CF(0) has four main subunits: a, b, b' and c.

It localises to the plastid. Its subcellular location is the chloroplast thylakoid membrane. The enzyme catalyses ATP + H2O + 4 H(+)(in) = ADP + phosphate + 5 H(+)(out). Functionally, produces ATP from ADP in the presence of a proton gradient across the membrane. The alpha chain is a regulatory subunit. The protein is ATP synthase subunit alpha, chloroplastic of Zygnema circumcarinatum (Green alga).